The sequence spans 314 residues: tRNA uridine(34) hydroxylase (314 aa).

The Rhodanese domain occupies 140-234 (SRDDVILVDT…YLEETPAEES (95 aa)). Cys194 serves as the catalytic Cysteine persulfide intermediate.

It belongs to the TrhO family.

It catalyses the reaction uridine(34) in tRNA + AH2 + O2 = 5-hydroxyuridine(34) in tRNA + A + H2O. Functionally, catalyzes oxygen-dependent 5-hydroxyuridine (ho5U) modification at position 34 in tRNAs. The protein is tRNA uridine(34) hydroxylase of Acinetobacter baylyi (strain ATCC 33305 / BD413 / ADP1).